The sequence spans 91 residues: UPF0223 protein SACOL1106 (91 aa).

Belongs to the UPF0223 family.

In Staphylococcus aureus (strain COL), this protein is UPF0223 protein SACOL1106.